Here is a 591-residue protein sequence, read N- to C-terminus: L-fucose isomerase (591 aa).

Catalysis depends on proton acceptor residues Glu-337 and Asp-361. Residues Glu-337, Asp-361, and His-528 each coordinate Mn(2+).

Belongs to the L-fucose isomerase family. Homohexamer. Mn(2+) is required as a cofactor.

It is found in the cytoplasm. The catalysed reaction is L-fucose = L-fuculose. It participates in carbohydrate degradation; L-fucose degradation; L-lactaldehyde and glycerone phosphate from L-fucose: step 1/3. Converts the aldose L-fucose into the corresponding ketose L-fuculose. This is L-fucose isomerase from Escherichia coli O17:K52:H18 (strain UMN026 / ExPEC).